A 406-amino-acid polypeptide reads, in one-letter code: MAVNGERAVHDENLGVLDRELIRAQSIQGCVGNPQECNSCAITSASRLFLVGLQASVITSGLILQYHVCEAAVNATIMGLIVVSGLWPTSVKFLRTLAKLGRCLQTVVVLGFAVLWAVGCPISRDLPFVELLGISISAITGTVAAVHIHYYNFVTTFNGPHIYFYVMMLGTGLGGLLTVILYMYVSKYEVLIGLCISIVTLVSIVDAATDLQDTCIYRKNRHKQLNTYTDLGFAVVYTQNDRGRVCDHRESSRTLKRVFKGIRIMSVIPPVLYIVTPLMWAISHIIKLNHFIKLTQVTLAVSIGGHIIAFGLQGFAVLYQEKKNLWVIVLYTTTSVTGIAVTFAGISWGAIIILTSTVAAGLTCIQMMRLSVKPIDCFMASHITKVYHVCVYIIINLCYLCGTYVS.

10 consecutive transmembrane segments (helical) span residues 48 to 68 (LFLV…QYHV), 71 to 91 (AAVN…PTSV), 103 to 123 (CLQT…CPIS), 126 to 146 (LPFV…VAAV), 162 to 182 (IYFY…VILY), 188 to 208 (YEVL…VDAA), 266 to 286 (SVIP…SHII), 299 to 319 (LAVS…AVLY), 339 to 359 (IAVT…STVA), and 386 to 406 (VYHV…TYVS).

The protein belongs to the alphaherpesvirinae HHV-1 UL43 family.

The protein localises to the membrane. The protein is Membrane protein UL43 homolog of Varicella-zoster virus (strain Dumas) (HHV-3).